Here is a 166-residue protein sequence, read N- to C-terminus: Regulatory protein RecX (166 aa).

The protein belongs to the RecX family.

Its subcellular location is the cytoplasm. Functionally, modulates RecA activity. This is Regulatory protein RecX from Escherichia coli (strain SMS-3-5 / SECEC).